We begin with the raw amino-acid sequence, 863 residues long: Leucine--tRNA ligase (863 aa).

The short motif at 42–52 (PYPSGRLHMGH) is the 'HIGH' region element. Positions 622-626 (KMSKS) match the 'KMSKS' region motif. An ATP-binding site is contributed by K625.

The protein belongs to the class-I aminoacyl-tRNA synthetase family.

It localises to the cytoplasm. The enzyme catalyses tRNA(Leu) + L-leucine + ATP = L-leucyl-tRNA(Leu) + AMP + diphosphate. The chain is Leucine--tRNA ligase from Shewanella frigidimarina (strain NCIMB 400).